Here is a 118-residue protein sequence, read N- to C-terminus: Basic phospholipase A2 CM-II (118 aa).

Cystine bridges form between C11-C70, C26-C117, C28-C44, C43-C98, C50-C91, C59-C84, and C77-C89. 3 residues coordinate Ca(2+): Y27, G29, and G31. H47 is an active-site residue. D48 is a binding site for Ca(2+). D92 is a catalytic residue.

This sequence belongs to the phospholipase A2 family. Group I subfamily. D49 sub-subfamily. The cofactor is Ca(2+). As to expression, expressed by the venom gland.

It localises to the secreted. It catalyses the reaction a 1,2-diacyl-sn-glycero-3-phosphocholine + H2O = a 1-acyl-sn-glycero-3-phosphocholine + a fatty acid + H(+). Functionally, snake venom phospholipase A2 (PLA2) that causes myonecrosis when injected intramuscularly, causes neuromuscular blockade with a gradual contracture and a decreased sensitivity to ACh and KCl (in the chick biventer cervicis nerve-muscle preparation), abolishes twitches evoked by indirect stimulation earlier than those by direct stimulation (in the mouse phrenic nerve-diaphragm preparation), shows indirect hemolytic activity, and shows weak anticoagulant activity. PLA2 catalyzes the calcium-dependent hydrolysis of the 2-acyl groups in 3-sn-phosphoglycerides. This is Basic phospholipase A2 CM-II from Naja mossambica (Mozambique spitting cobra).